Here is a 78-residue protein sequence, read N- to C-terminus: uncharacterized protein (78 aa).

A disordered region spans residues 1–28; sequence MGGGNAQKSAMARAKNLEKAKAAGKGSQ.

This is an uncharacterized protein from Arabidopsis thaliana (Mouse-ear cress).